The following is a 116-amino-acid chain: Large ribosomal subunit protein bL19 (116 aa).

This sequence belongs to the bacterial ribosomal protein bL19 family.

Functionally, this protein is located at the 30S-50S ribosomal subunit interface and may play a role in the structure and function of the aminoacyl-tRNA binding site. This is Large ribosomal subunit protein bL19 from Mycoplasmopsis agalactiae (strain NCTC 10123 / CIP 59.7 / PG2) (Mycoplasma agalactiae).